A 629-amino-acid polypeptide reads, in one-letter code: Dolichyl-diphosphooligosaccharide--protein glycosyltransferase subunit 2 (629 aa).

An N-terminal signal peptide occupies residues 1-22; it reads MAPPGSRTVLLLALTIIARTQA. Residues 23-541 lie on the Lumenal side of the membrane; the sequence is LKPTHYLTKH…RDPEKRPPTV (519 aa). Asparagine 106 is a glycosylation site (N-linked (GlcNAc...) asparagine). A Glycyl lysine isopeptide (Lys-Gly) (interchain with G-Cter in ubiquitin) cross-link involves residue lysine 154. The helical transmembrane segment at 542 to 562 threads the bilayer; sequence VSNTFTGLILSPLLLLFALWI. The Cytoplasmic portion of the chain corresponds to 563-570; sequence RIGAKISN. The chain crosses the membrane as a helical span at residues 571–591; it reads FTFGLTIIFHLGHAMLAMYVY. The Lumenal segment spans residues 592-594; sequence WTQ. A helical transmembrane segment spans residues 595-615; sequence LNMFQTLKYLAILGSVTFLAG. Over 616-629 the chain is Cytoplasmic; it reads NRMLAQQAIKRTAH.

The protein belongs to the SWP1 family. In terms of assembly, component of the oligosaccharyltransferase (OST) complex. OST exists in two different complex forms which contain common core subunits RPN1, RPN2, OST48, OST4, DAD1 and TMEM258, either STT3A or STT3B as catalytic subunits, and form-specific accessory subunits. STT3A complex assembly occurs through the formation of 3 subcomplexes. Subcomplex 1 contains RPN1 and TMEM258, subcomplex 2 contains the STT3A-specific subunits STT3A, DC2/OSTC, and KCP2 as well as the core subunit OST4, and subcomplex 3 contains RPN2, DAD1, and OST48. The STT3A complex can form stable complexes with the Sec61 complex or with both the Sec61 and TRAP complexes. Interacts with DDI2. Interacts with TMEM35A/NACHO.

It localises to the endoplasmic reticulum. Its subcellular location is the endoplasmic reticulum membrane. It functions in the pathway protein modification; protein glycosylation. Functionally, subunit of the oligosaccharyl transferase (OST) complex that catalyzes the initial transfer of a defined glycan (Glc(3)Man(9)GlcNAc(2) in eukaryotes) from the lipid carrier dolichol-pyrophosphate to an asparagine residue within an Asn-X-Ser/Thr consensus motif in nascent polypeptide chains, the first step in protein N-glycosylation. N-glycosylation occurs cotranslationally and the complex associates with the Sec61 complex at the channel-forming translocon complex that mediates protein translocation across the endoplasmic reticulum (ER). All subunits are required for a maximal enzyme activity. This chain is Dolichyl-diphosphooligosaccharide--protein glycosyltransferase subunit 2, found in Sus scrofa (Pig).